A 556-amino-acid polypeptide reads, in one-letter code: Testis-specific protein 10-interacting protein (556 aa).

Residues 1–16 (MGQDTDMLNTYQQLVR) show a composition bias toward polar residues. Disordered regions lie at residues 1-31 (MGQD…LQAP), 50-102 (GCLG…LLPR), 123-155 (LQPS…ANLP), and 179-309 (GGVS…QWRK). Over residues 208 to 219 (GSASDKQVQLQS) the composition is skewed to polar residues. Positions 244-258 (SEEEQFSEATEEAEE) are enriched in acidic residues. Over residues 289-301 (QGQSQGSSPSFNN) the composition is skewed to polar residues. Positions 379–464 (RQEATRSLLQ…LQGIQHRVQA (86 aa)) form a coiled coil. Residues 503–556 (AGKVDREGTPRKPRSHRSMGVRMEHSPQRPPRTEPTGSQPDRHYNPSLDPECSP) are disordered.

The polypeptide is Testis-specific protein 10-interacting protein (TSGA10IP) (Homo sapiens (Human)).